Here is a 644-residue protein sequence, read N- to C-terminus: Exoribonuclease 2 (644 aa).

The RNB domain occupies 189–516 (REDLTALDFV…NHRLLKAVIK (328 aa)). Residues 561 to 643 (DTRFAAEIVD…ETRSIIARPV (83 aa)) form the S1 motif domain.

This sequence belongs to the RNR ribonuclease family. RNase II subfamily.

The protein localises to the cytoplasm. It carries out the reaction Exonucleolytic cleavage in the 3'- to 5'-direction to yield nucleoside 5'-phosphates.. Involved in mRNA degradation. Hydrolyzes single-stranded polyribonucleotides processively in the 3' to 5' direction. In Escherichia coli (strain SMS-3-5 / SECEC), this protein is Exoribonuclease 2.